The sequence spans 644 residues: Threonine--tRNA ligase (644 aa).

In terms of domain architecture, TGS spans Met1 to Thr62. Residues Asp240–Pro538 form a catalytic region. The Zn(2+) site is built by Cys334, His385, and His515.

It belongs to the class-II aminoacyl-tRNA synthetase family. In terms of assembly, homodimer. Requires Zn(2+) as cofactor.

Its subcellular location is the cytoplasm. It catalyses the reaction tRNA(Thr) + L-threonine + ATP = L-threonyl-tRNA(Thr) + AMP + diphosphate + H(+). Catalyzes the attachment of threonine to tRNA(Thr) in a two-step reaction: L-threonine is first activated by ATP to form Thr-AMP and then transferred to the acceptor end of tRNA(Thr). Also edits incorrectly charged L-seryl-tRNA(Thr). The protein is Threonine--tRNA ligase of Lactobacillus helveticus (strain DPC 4571).